The sequence spans 158 residues: Arginine repressor (158 aa).

Belongs to the ArgR family.

Its subcellular location is the cytoplasm. Its pathway is amino-acid biosynthesis; L-arginine biosynthesis [regulation]. Its function is as follows. Regulates arginine biosynthesis genes. This is Arginine repressor from Anaeromyxobacter sp. (strain Fw109-5).